The sequence spans 636 residues: Probable potassium transport system protein Kup (636 aa).

12 helical membrane-spanning segments follow: residues 22–42 (VGLL…SPLY), 64–84 (ILSL…VMFI), 115–135 (LMVI…MITP), 150–170 (FDGI…ALFL), 182–202 (LFGP…VHGI), 220–240 (FFVV…LALT), 261–281 (WFIL…ALLL), 293–313 (LLAP…ATVI), 351–371 (IYIG…VIGF), 383–403 (VAVT…MLLL), 408–428 (PLLA…FFAA), and 433–453 (IVQG…LMST).

Belongs to the HAK/KUP transporter (TC 2.A.72) family.

It is found in the cell inner membrane. It catalyses the reaction K(+)(in) + H(+)(in) = K(+)(out) + H(+)(out). In terms of biological role, transport of potassium into the cell. Likely operates as a K(+):H(+) symporter. The sequence is that of Probable potassium transport system protein Kup from Pseudomonas putida (strain ATCC 700007 / DSM 6899 / JCM 31910 / BCRC 17059 / LMG 24140 / F1).